Here is a 148-residue protein sequence, read N- to C-terminus: Arginine repressor (148 aa).

It belongs to the ArgR family.

It is found in the cytoplasm. Its pathway is amino-acid biosynthesis; L-arginine biosynthesis [regulation]. Its function is as follows. Regulates arginine biosynthesis genes. In Chlorobium luteolum (strain DSM 273 / BCRC 81028 / 2530) (Pelodictyon luteolum), this protein is Arginine repressor.